Reading from the N-terminus, the 107-residue chain is Integration host factor subunit beta (107 aa).

Residues 82-101 (PGKELRERVDRRAGEPLKAE) are compositionally biased toward basic and acidic residues. Residues 82-107 (PGKELRERVDRRAGEPLKAEEPDDDL) are disordered.

Belongs to the bacterial histone-like protein family. In terms of assembly, heterodimer of an alpha and a beta chain.

Functionally, this protein is one of the two subunits of integration host factor, a specific DNA-binding protein that functions in genetic recombination as well as in transcriptional and translational control. The chain is Integration host factor subunit beta from Paraburkholderia phytofirmans (strain DSM 17436 / LMG 22146 / PsJN) (Burkholderia phytofirmans).